Here is a 205-residue protein sequence, read N- to C-terminus: Large ribosomal subunit protein uL18 (205 aa).

This sequence belongs to the universal ribosomal protein uL18 family. As to quaternary structure, part of the 50S ribosomal subunit. Contacts the 5S and 23S rRNAs.

In terms of biological role, this is one of the proteins that bind and probably mediate the attachment of the 5S RNA into the large ribosomal subunit, where it forms part of the central protuberance. This chain is Large ribosomal subunit protein uL18, found in Pyrobaculum arsenaticum (strain DSM 13514 / JCM 11321 / PZ6).